Here is a 78-residue protein sequence, read N- to C-terminus: NAD(P)H-quinone oxidoreductase subunit O (78 aa).

Belongs to the complex I NdhO subunit family. In terms of assembly, NDH-1 can be composed of about 15 different subunits; different subcomplexes with different compositions have been identified which probably have different functions.

Its subcellular location is the cell inner membrane. The enzyme catalyses a plastoquinone + NADH + (n+1) H(+)(in) = a plastoquinol + NAD(+) + n H(+)(out). The catalysed reaction is a plastoquinone + NADPH + (n+1) H(+)(in) = a plastoquinol + NADP(+) + n H(+)(out). NDH-1 shuttles electrons from an unknown electron donor, via FMN and iron-sulfur (Fe-S) centers, to quinones in the respiratory and/or the photosynthetic chain. The immediate electron acceptor for the enzyme in this species is believed to be plastoquinone. Couples the redox reaction to proton translocation, and thus conserves the redox energy in a proton gradient. Cyanobacterial NDH-1 also plays a role in inorganic carbon-concentration. In Gloeobacter violaceus (strain ATCC 29082 / PCC 7421), this protein is NAD(P)H-quinone oxidoreductase subunit O.